A 543-amino-acid polypeptide reads, in one-letter code: ATP synthase subunit alpha (543 aa).

Residue 174-181 (GDRQTGKT) participates in ATP binding.

This sequence belongs to the ATPase alpha/beta chains family. F-type ATPases have 2 components, CF(1) - the catalytic core - and CF(0) - the membrane proton channel. CF(1) has five subunits: alpha(3), beta(3), gamma(1), delta(1), epsilon(1). CF(0) has three main subunits: a(1), b(2) and c(9-12). The alpha and beta chains form an alternating ring which encloses part of the gamma chain. CF(1) is attached to CF(0) by a central stalk formed by the gamma and epsilon chains, while a peripheral stalk is formed by the delta and b chains.

The protein localises to the cell membrane. It catalyses the reaction ATP + H2O + 4 H(+)(in) = ADP + phosphate + 5 H(+)(out). Produces ATP from ADP in the presence of a proton gradient across the membrane. The alpha chain is a regulatory subunit. In Bifidobacterium longum subsp. infantis (strain ATCC 15697 / DSM 20088 / JCM 1222 / NCTC 11817 / S12), this protein is ATP synthase subunit alpha.